The following is a 165-amino-acid chain: UPF0303 protein Bphyt_1734 (165 aa).

This sequence belongs to the UPF0303 family.

This is UPF0303 protein Bphyt_1734 from Paraburkholderia phytofirmans (strain DSM 17436 / LMG 22146 / PsJN) (Burkholderia phytofirmans).